The primary structure comprises 292 residues: Glutamate racemase (292 aa).

Substrate is bound by residues Asp-28–Ser-29 and Tyr-60–Gly-61. Cys-91 (proton donor/acceptor) is an active-site residue. A substrate-binding site is contributed by Asn-92–Thr-93. Cys-200 acts as the Proton donor/acceptor in catalysis. Position 201-202 (Thr-201–His-202) interacts with substrate.

It belongs to the aspartate/glutamate racemases family.

It carries out the reaction L-glutamate = D-glutamate. The protein operates within cell wall biogenesis; peptidoglycan biosynthesis. In terms of biological role, provides the (R)-glutamate required for cell wall biosynthesis. The chain is Glutamate racemase from Trichormus variabilis (strain ATCC 29413 / PCC 7937) (Anabaena variabilis).